Consider the following 145-residue polypeptide: MKIVLQRSQHASVSVDGKIVGQIERGLVALIGIGHEDTEATASALADKTAGLRIFSDDNGKMERNVIDAGGDVLAISQFTLLADCRKGRRPAFTDAAPPDRANELYEHYVSELRKTGLSVPCGIFAADMAVSLTNDGPVTIILEL.

The short motif at 137–138 is the Gly-cisPro motif, important for rejection of L-amino acids element; sequence GP.

This sequence belongs to the DTD family. In terms of assembly, homodimer.

The protein localises to the cytoplasm. It catalyses the reaction glycyl-tRNA(Ala) + H2O = tRNA(Ala) + glycine + H(+). The enzyme catalyses a D-aminoacyl-tRNA + H2O = a tRNA + a D-alpha-amino acid + H(+). Its function is as follows. An aminoacyl-tRNA editing enzyme that deacylates mischarged D-aminoacyl-tRNAs. Also deacylates mischarged glycyl-tRNA(Ala), protecting cells against glycine mischarging by AlaRS. Acts via tRNA-based rather than protein-based catalysis; rejects L-amino acids rather than detecting D-amino acids in the active site. By recycling D-aminoacyl-tRNA to D-amino acids and free tRNA molecules, this enzyme counteracts the toxicity associated with the formation of D-aminoacyl-tRNA entities in vivo and helps enforce protein L-homochirality. The polypeptide is D-aminoacyl-tRNA deacylase (Rhodopirellula baltica (strain DSM 10527 / NCIMB 13988 / SH1)).